Here is a 165-residue protein sequence, read N- to C-terminus: Growth arrest and DNA damage-inducible protein GADD45 alpha (165 aa).

The residue at position 2 (Thr-2) is a Phosphothreonine.

It belongs to the GADD45 family. In terms of assembly, interacts with AURKA, PCNA, GADD45GIP1 and MAPK14.

It is found in the nucleus. Might affect PCNA interaction with some CDK (cell division protein kinase) complexes; stimulates DNA excision repair in vitro and inhibits entry of cells into S phase. In T-cells, functions as a regulator of p38 MAPKs by inhibiting p88 phosphorylation and activity. The polypeptide is Growth arrest and DNA damage-inducible protein GADD45 alpha (GADD45A) (Cricetulus griseus (Chinese hamster)).